Here is a 316-residue protein sequence, read N- to C-terminus: tRNA pseudouridine synthase B (316 aa).

Aspartate 47 acts as the Nucleophile in catalysis.

Belongs to the pseudouridine synthase TruB family. Type 1 subfamily.

The catalysed reaction is uridine(55) in tRNA = pseudouridine(55) in tRNA. Its function is as follows. Responsible for synthesis of pseudouridine from uracil-55 in the psi GC loop of transfer RNAs. This is tRNA pseudouridine synthase B from Aliivibrio fischeri (strain MJ11) (Vibrio fischeri).